The following is a 298-amino-acid chain: GTP cyclohydrolase FolE2 (298 aa).

The protein belongs to the GTP cyclohydrolase IV family.

The enzyme catalyses GTP + H2O = 7,8-dihydroneopterin 3'-triphosphate + formate + H(+). The protein operates within cofactor biosynthesis; 7,8-dihydroneopterin triphosphate biosynthesis; 7,8-dihydroneopterin triphosphate from GTP: step 1/1. Its function is as follows. Converts GTP to 7,8-dihydroneopterin triphosphate. In Xylella fastidiosa (strain M12), this protein is GTP cyclohydrolase FolE2.